Reading from the N-terminus, the 131-residue chain is MSMSDPIADMLTRIRNAQQVDKTTVNMPSSKLKVAIATVLKDEGYIDSFEVKGSQAKPELEITLKYYAGRPVIERIERVSRPGLRIYKGRSNIPQVMNGLGVAIVSTSRGVMTDRKARANGVGGEVLCYVA.

The protein belongs to the universal ribosomal protein uS8 family. Part of the 30S ribosomal subunit. Contacts proteins S5 and S12.

In terms of biological role, one of the primary rRNA binding proteins, it binds directly to 16S rRNA central domain where it helps coordinate assembly of the platform of the 30S subunit. In Bordetella avium (strain 197N), this protein is Small ribosomal subunit protein uS8.